The chain runs to 347 residues: NADH-ubiquinone oxidoreductase chain 2 (347 aa).

A run of 10 helical transmembrane segments spans residues 3–23 (PLILIMIMLTVILGTTIVMMS), 25–45 (HWLMIWMGFEMNMLAVIPLLM), 59–79 (YFLTQATASMLLMLAIIINLL), 96–116 (IIMTLAMAMKMGLAPLHFWVP), 148–170 (GINLDLILLMSMMSIAIGGWGGL), 178–198 (ILAYSSIAHMGWMASILAFNP), 200–220 (MTLLNLLLYILMTTTTFMLFM), 247–267 (IMLSLGGLPPLVGFLPKWMII), 276–296 (ITLATLMAITALLNLFFYMRL), and 326–346 (LPMLIILSTITLPLAPAITLL).

Belongs to the complex I subunit 2 family. As to quaternary structure, core subunit of respiratory chain NADH dehydrogenase (Complex I) which is composed of 45 different subunits. Interacts with TMEM242.

Its subcellular location is the mitochondrion inner membrane. The catalysed reaction is a ubiquinone + NADH + 5 H(+)(in) = a ubiquinol + NAD(+) + 4 H(+)(out). Functionally, core subunit of the mitochondrial membrane respiratory chain NADH dehydrogenase (Complex I) which catalyzes electron transfer from NADH through the respiratory chain, using ubiquinone as an electron acceptor. Essential for the catalytic activity and assembly of complex I. The polypeptide is NADH-ubiquinone oxidoreductase chain 2 (Saccopteryx leptura (Lesser sac-winged bat)).